The following is a 511-amino-acid chain: Cytochrome P450 26B1 (511 aa).

Cysteine 440 is a heme binding site.

It belongs to the cytochrome P450 family. Heme is required as a cofactor.

The protein resides in the endoplasmic reticulum membrane. Its subcellular location is the microsome membrane. The enzyme catalyses all-trans-retinoate + reduced [NADPH--hemoprotein reductase] + O2 = all-trans-4-hydroxyretinoate + oxidized [NADPH--hemoprotein reductase] + H2O + H(+). It catalyses the reaction all-trans-retinoate + reduced [NADPH--hemoprotein reductase] + O2 = all-trans-18-hydroxyretinoate + oxidized [NADPH--hemoprotein reductase] + H2O + H(+). Functionally, a cytochrome P450 monooxygenase involved in the metabolism of retinoates (RAs), the active metabolites of vitamin A, and critical signaling molecules in animals. RAs exist as at least four different isomers: all-trans-RA (atRA), 9-cis-RA, 13-cis-RA, and 9,13-dicis-RA, where atRA is considered to be the biologically active isomer, although 9-cis-RA and 13-cis-RA also have activity. Catalyzes the hydroxylation of atRA primarily at C-4 and C-18, thereby contributing to the regulation of atRA homeostasis and signaling. Hydroxylation of atRA limits its biological activity and initiates a degradative process leading to its eventual elimination. Involved in the convertion of atRA to all-trans-4-oxo-RA. Can oxidize all-trans-13,14-dihydroretinoate (DRA) to metabolites which could include all-trans-4-oxo-DRA, all-trans-4-hydroxy-DRA, all-trans-5,8-epoxy-DRA, and all-trans-18-hydroxy-DRA. In Xenopus tropicalis (Western clawed frog), this protein is Cytochrome P450 26B1 (cyp26b1).